Reading from the N-terminus, the 287-residue chain is Bifunctional protein FolD (287 aa).

Residues 165–167, Ser-190, and Ile-231 contribute to the NADP(+) site; that span reads GRS.

Belongs to the tetrahydrofolate dehydrogenase/cyclohydrolase family. Homodimer.

The enzyme catalyses (6R)-5,10-methylene-5,6,7,8-tetrahydrofolate + NADP(+) = (6R)-5,10-methenyltetrahydrofolate + NADPH. It catalyses the reaction (6R)-5,10-methenyltetrahydrofolate + H2O = (6R)-10-formyltetrahydrofolate + H(+). It participates in one-carbon metabolism; tetrahydrofolate interconversion. Its function is as follows. Catalyzes the oxidation of 5,10-methylenetetrahydrofolate to 5,10-methenyltetrahydrofolate and then the hydrolysis of 5,10-methenyltetrahydrofolate to 10-formyltetrahydrofolate. In Carboxydothermus hydrogenoformans (strain ATCC BAA-161 / DSM 6008 / Z-2901), this protein is Bifunctional protein FolD.